The sequence spans 203 residues: Holliday junction branch migration complex subunit RuvA (203 aa).

Residues methionine 1–asparagine 64 are domain I. The segment at asparagine 65–proline 142 is domain II. Residues alanine 143–proline 154 form a flexible linker region. The segment at alanine 155–leucine 203 is domain III.

Belongs to the RuvA family. As to quaternary structure, homotetramer. Forms an RuvA(8)-RuvB(12)-Holliday junction (HJ) complex. HJ DNA is sandwiched between 2 RuvA tetramers; dsDNA enters through RuvA and exits via RuvB. An RuvB hexamer assembles on each DNA strand where it exits the tetramer. Each RuvB hexamer is contacted by two RuvA subunits (via domain III) on 2 adjacent RuvB subunits; this complex drives branch migration. In the full resolvosome a probable DNA-RuvA(4)-RuvB(12)-RuvC(2) complex forms which resolves the HJ.

The protein resides in the cytoplasm. The RuvA-RuvB-RuvC complex processes Holliday junction (HJ) DNA during genetic recombination and DNA repair, while the RuvA-RuvB complex plays an important role in the rescue of blocked DNA replication forks via replication fork reversal (RFR). RuvA specifically binds to HJ cruciform DNA, conferring on it an open structure. The RuvB hexamer acts as an ATP-dependent pump, pulling dsDNA into and through the RuvAB complex. HJ branch migration allows RuvC to scan DNA until it finds its consensus sequence, where it cleaves and resolves the cruciform DNA. This Citrobacter koseri (strain ATCC BAA-895 / CDC 4225-83 / SGSC4696) protein is Holliday junction branch migration complex subunit RuvA.